The chain runs to 230 residues: UPF0494 membrane protein PB2B2.14c (230 aa).

The next 3 helical transmembrane spans lie at 78–98 (WPLL…NFEV), 120–140 (IWGP…GLIY), and 148–168 (AIPL…VAMV).

The protein belongs to the UPF0494 family.

It localises to the membrane. In Schizosaccharomyces pombe (strain 972 / ATCC 24843) (Fission yeast), this protein is UPF0494 membrane protein PB2B2.14c.